The primary structure comprises 231 residues: Enolase-phosphatase E1 (231 aa).

The protein belongs to the HAD-like hydrolase superfamily. MasA/MtnC family. Monomer. The cofactor is Mg(2+).

It catalyses the reaction 5-methylsulfanyl-2,3-dioxopentyl phosphate + H2O = 1,2-dihydroxy-5-(methylsulfanyl)pent-1-en-3-one + phosphate. It participates in amino-acid biosynthesis; L-methionine biosynthesis via salvage pathway; L-methionine from S-methyl-5-thio-alpha-D-ribose 1-phosphate: step 3/6. The protein operates within amino-acid biosynthesis; L-methionine biosynthesis via salvage pathway; L-methionine from S-methyl-5-thio-alpha-D-ribose 1-phosphate: step 4/6. Its function is as follows. Bifunctional enzyme that catalyzes the enolization of 2,3-diketo-5-methylthiopentyl-1-phosphate (DK-MTP-1-P) into the intermediate 2-hydroxy-3-keto-5-methylthiopentenyl-1-phosphate (HK-MTPenyl-1-P), which is then dephosphorylated to form the acireductone 1,2-dihydroxy-3-keto-5-methylthiopentene (DHK-MTPene). This chain is Enolase-phosphatase E1, found in Granulibacter bethesdensis (strain ATCC BAA-1260 / CGDNIH1).